Consider the following 406-residue polypeptide: MAAGAGARPAPRWLKALTEPLSAAQLRRLEEHRYTAAGVSLLEPPLQLYWTWLLQWIPLWMAPNSITLLGLAINMLTTLVLISYCPTVTEEAPYWTYLLCALGLFIYQSLDAIDGKQARRTNSCSPLGELFDHGCDSLSTVFMAVGASIAVRLGTHPDWLFFCSFIGMFMFYCAHWQTYVSGVLRFGKVDVTEIQIALVIVFVLSTFGGATMWDYTIPILEIKLKILPVLGVVGGAIFSCSNYFHVILHGGVGKNGSTIAGTSVLSPGLHIGIIIILAIMIYKKSATNLFEKHPCLYTLMFGCVFAKVSQKLVIAHMTKSELYLQDTVFIGPGLLFLDQYFNNFVDEYIVLWIAMVISSLDMMRYFSALCLQISRHLHLSIFKTSCHQAPEQVQVLPPKSHQNNMD.

Ala2 is modified (N-acetylalanine). The Cytoplasmic portion of the chain corresponds to 2-62 (AAGAGARPAP…LLQWIPLWMA (61 aa)). A helical transmembrane segment spans residues 63-83 (PNSITLLGLAINMLTTLVLIS). Residue Asn64 coordinates CDP-choline. Residues 84–93 (YCPTVTEEAP) lie on the Lumenal side of the membrane. A helical transmembrane segment spans residues 94 to 118 (YWTYLLCALGLFIYQSLDAIDGKQA). Mg(2+)-binding residues include Asp111 and Asp114. Arg119 contributes to the CDP-choline binding site. Residues 119 to 125 (RRTNSCS) lie on the Cytoplasmic side of the membrane. Residues 126–150 (PLGELFDHGCDSLSTVFMAVGASIA) traverse the membrane as a helical segment. Asp132 provides a ligand contact to Mg(2+). His133 serves as the catalytic Proton acceptor. Asp136 lines the Mg(2+) pocket. Topologically, residues 151–160 (VRLGTHPDWL) are lumenal. The helical transmembrane segment at 161-179 (FFCSFIGMFMFYCAHWQTY) threads the bilayer. The Cytoplasmic segment spans residues 180-190 (VSGVLRFGKVD). The helical transmembrane segment at 191–207 (VTEIQIALVIVFVLSTF) threads the bilayer. Residues 208–222 (GGATMWDYTIPILEI) are Lumenal-facing. The chain crosses the membrane as a helical span at residues 223 to 248 (KLKILPVLGVVGGAIFSCSNYFHVIL). The Cytoplasmic portion of the chain corresponds to 249–265 (HGGVGKNGSTIAGTSVL). The helical transmembrane segment at 266–281 (SPGLHIGIIIILAIMI) threads the bilayer. Over 282–293 (YKKSATNLFEKH) the chain is Lumenal. Residues 294-316 (PCLYTLMFGCVFAKVSQKLVIAH) traverse the membrane as a helical segment. Residues 317-329 (MTKSELYLQDTVF) lie on the Cytoplasmic side of the membrane. The helical transmembrane segment at 330-339 (IGPGLLFLDQ) threads the bilayer. The Lumenal portion of the chain corresponds to 340-346 (YFNNFVD). The helical transmembrane segment at 347–376 (EYIVLWIAMVISSLDMMRYFSALCLQISRH) threads the bilayer. The Cytoplasmic segment spans residues 377–406 (LHLSIFKTSCHQAPEQVQVLPPKSHQNNMD).

The protein belongs to the CDP-alcohol phosphatidyltransferase class-I family. It depends on Mg(2+) as a cofactor. Mn(2+) serves as cofactor.

The protein resides in the golgi apparatus membrane. The enzyme catalyses CDP-choline + a 1,2-diacyl-sn-glycerol = a 1,2-diacyl-sn-glycero-3-phosphocholine + CMP + H(+). It carries out the reaction 1-octadecanoyl-2-(5Z,8Z,11Z,14Z-eicosatetraenoyl)-sn-glycerol + CDP-choline = 1-octadecanoyl-2-(5Z,8Z,11Z,14Z-eicosatetraenoyl)-sn-glycero-3-phosphocholine + CMP + H(+). The catalysed reaction is 1-hexadecanoyl-2-(9Z-octadecenoyl)-sn-glycerol + CDP-choline = 1-hexadecanoyl-2-(9Z-octadecenoyl)-sn-glycero-3-phosphocholine + CMP + H(+). It catalyses the reaction 1-hexadecanoyl-2-(4Z,7Z,10Z,13Z,16Z,19Z-docosahexaenoyl)-sn-glycerol + CDP-choline = 1-hexadecanoyl-2-(4Z,7Z,10Z,13Z,16Z,19Z-docosahexaenoyl)-sn-glycero-3-phosphocholine + CMP + H(+). The enzyme catalyses 1,2-dioctanoyl-sn-glycerol + CDP-choline = 1,2-dioctanoyl-sn-glycero-3-phosphocholine + CMP + H(+). It participates in phospholipid metabolism; phosphatidylcholine biosynthesis; phosphatidylcholine from phosphocholine: step 2/2. Its function is as follows. Catalyzes the final step of de novo phosphatidylcholine (PC) synthesis, i.e. the transfer of choline phosphate from CDP-choline to the free hydroxyl of a diacylglycerol (DAG), producing a PC. It thereby plays a central role in the formation and maintenance of vesicular membranes. In Bos taurus (Bovine), this protein is Cholinephosphotransferase 1 (CHPT1).